The sequence spans 336 residues: Anthranilate phosphoribosyltransferase (336 aa).

5-phospho-alpha-D-ribose 1-diphosphate is bound by residues Gly-79, 82-83 (GD), Thr-87, 89-92 (NIST), 107-115 (KHGNRSVSS), and Ser-119. Gly-79 is an anthranilate binding site. Ser-91 lines the Mg(2+) pocket. Residue Asn-110 coordinates anthranilate. Arg-165 serves as a coordination point for anthranilate. Mg(2+) is bound by residues Asp-224 and Glu-225.

Belongs to the anthranilate phosphoribosyltransferase family. As to quaternary structure, homodimer. It depends on Mg(2+) as a cofactor.

The catalysed reaction is N-(5-phospho-beta-D-ribosyl)anthranilate + diphosphate = 5-phospho-alpha-D-ribose 1-diphosphate + anthranilate. The protein operates within amino-acid biosynthesis; L-tryptophan biosynthesis; L-tryptophan from chorismate: step 2/5. In terms of biological role, catalyzes the transfer of the phosphoribosyl group of 5-phosphorylribose-1-pyrophosphate (PRPP) to anthranilate to yield N-(5'-phosphoribosyl)-anthranilate (PRA). This Endomicrobium trichonymphae protein is Anthranilate phosphoribosyltransferase.